The sequence spans 197 residues: Stanniocalcin-2 (197 aa).

The tract at residues 1-20 is disordered; it reads TDAXNPPEGPQDRGSQQKGR.

Belongs to the stanniocalcin family. In terms of assembly, homodimer; disulfide-linked.

It localises to the secreted. Its function is as follows. Has an anti-hypocalcemic action on calcium and phosphate homeostasis. The sequence is that of Stanniocalcin-2 (STC2) from Cavia porcellus (Guinea pig).